We begin with the raw amino-acid sequence, 208 residues long: Uracil phosphoribosyltransferase (208 aa).

5-phospho-alpha-D-ribose 1-diphosphate is bound by residues Arg78, Arg103, and 130-138 (DPMLATANS). Uracil-binding positions include Ile193 and 198–200 (GDA). Asp199 is a binding site for 5-phospho-alpha-D-ribose 1-diphosphate.

Belongs to the UPRTase family. Mg(2+) serves as cofactor.

The catalysed reaction is UMP + diphosphate = 5-phospho-alpha-D-ribose 1-diphosphate + uracil. It functions in the pathway pyrimidine metabolism; UMP biosynthesis via salvage pathway; UMP from uracil: step 1/1. With respect to regulation, allosterically activated by GTP. Functionally, catalyzes the conversion of uracil and 5-phospho-alpha-D-ribose 1-diphosphate (PRPP) to UMP and diphosphate. This Brucella abortus biovar 1 (strain 9-941) protein is Uracil phosphoribosyltransferase.